A 114-amino-acid polypeptide reads, in one-letter code: Ribosome-binding factor A (114 aa).

This sequence belongs to the RbfA family. Monomer. Binds 30S ribosomal subunits, but not 50S ribosomal subunits or 70S ribosomes.

It is found in the cytoplasm. Its function is as follows. One of several proteins that assist in the late maturation steps of the functional core of the 30S ribosomal subunit. Associates with free 30S ribosomal subunits (but not with 30S subunits that are part of 70S ribosomes or polysomes). Required for efficient processing of 16S rRNA. May interact with the 5'-terminal helix region of 16S rRNA. The protein is Ribosome-binding factor A of Listeria innocua serovar 6a (strain ATCC BAA-680 / CLIP 11262).